The chain runs to 78 residues: Large ribosomal subunit protein bL28 (78 aa).

The protein belongs to the bacterial ribosomal protein bL28 family.

This is Large ribosomal subunit protein bL28 from Synechococcus sp. (strain CC9311).